We begin with the raw amino-acid sequence, 251 residues long: Transcription initiation factor TFIID subunit 9B (251 aa).

An N-acetylmethionine modification is found at Met1. Position 147 is a phosphoserine (Ser147). Residues Thr159 and Thr174 each carry the phosphothreonine modification. Residue Ser177 is modified to Phosphoserine. Residues 229–251 (QNTANEANPLKRKHEDDDDNDIM) form a disordered region.

This sequence belongs to the TAF9 family. As to quaternary structure, binds TAF5 and TAF6. Component of TFIID and the TATA-binding protein-free TAF complex (TFTC). TFIID is composed of TATA binding protein (TBP) and a number of TBP-associated factors (TAFs). Binds N-terminal domain of p53/TP53 which is essential for transcription.

The protein resides in the nucleus. Its function is as follows. Essential for cell viability. TAF9 and TAF9B are involved in transcriptional activation as well as repression of distinct but overlapping sets of genes. May have a role in gene regulation associated with apoptosis. TAFs are components of the transcription factor IID (TFIID) complex, the TBP-free TAFII complex (TFTC), the PCAF histone acetylase complex and the STAGA transcription coactivator-HAT complex. TFIID or TFTC are essential for the regulation of RNA polymerase II-mediated transcription. The sequence is that of Transcription initiation factor TFIID subunit 9B (TAF9B) from Homo sapiens (Human).